We begin with the raw amino-acid sequence, 151 residues long: Large ribosomal subunit protein bL9 (151 aa).

The protein belongs to the bacterial ribosomal protein bL9 family.

Its function is as follows. Binds to the 23S rRNA. The sequence is that of Large ribosomal subunit protein bL9 from Mycolicibacterium gilvum (strain PYR-GCK) (Mycobacterium gilvum (strain PYR-GCK)).